The sequence spans 1176 residues: Serine/threonine-protein kinase pakF (1176 aa).

Composition is skewed to low complexity over residues 1 to 19 (MSNL…ESSS) and 32 to 52 (NLLN…SGSN). Disordered stretches follow at residues 1–231 (MSNL…HESR) and 254–361 (LPST…KKTK). Pro residues predominate over residues 64–76 (QLPPNYTPPPPPH). A coiled-coil region spans residues 92-133 (LNNENSDNNNNNNNNNNNNNNNNNNNNNNNNNNNEQLARTES). Composition is skewed to low complexity over residues 93 to 125 (NNEN…NNNN), 133 to 148 (SSVS…SNSG), and 156 to 172 (SSNI…ETYS). Residues 173-197 (MSPNQTLNSNIDSSEQQHQDLSSSV) show a composition bias toward polar residues. Low complexity predominate over residues 198-226 (NNNNNNNNNNNNNNNNNNNNNNNNNNNNN). The segment covering 254 to 289 (LPSTPTQQNVEIQTTNGGSSETSPNGLISPRPSNDQ) has biased composition (polar residues). Residues 316–353 (SLSSSTTTPSTTSSLTSSPSSSSLAISSPNTTAATTTN) are compositionally biased toward low complexity. The 14-residue stretch at 370 to 383 (ISVPYNVIHKMHVD) folds into the CRIB domain. In terms of domain architecture, Protein kinase spans 394–646 (FILDEKLGDG…PIDLLCHPFL (253 aa)). ATP contacts are provided by residues 400-408 (LGDGAYGSV) and lysine 423. The Proton acceptor role is filled by aspartate 514. 4 disordered regions span residues 670–723 (IDDL…SDEL), 753–885 (QEEE…GNNL), 968–1083 (HTTS…TGRA), and 1112–1176 (NSNS…NIKK). 2 stretches are compositionally biased toward low complexity: residues 682–693 (SQSSSSSSPQSP) and 710–720 (SIISPIPSSPS). Composition is skewed to acidic residues over residues 767–789 (DEQD…EDVD) and 813–844 (DQDD…DEEI). Residues 812–873 (SDQDDEEEDE…NKKKNKKNNL (62 aa)) are a coiled coil. Basic residues predominate over residues 852-870 (VRKKKNKSTKKSNKKKNKK). Polar residues-rich tracts occupy residues 873–884 (LSTIGKSGSGNN) and 968–985 (HTTS…ATNL). Composition is skewed to low complexity over residues 991–1044 (SSSP…RPNS), 1051–1066 (NNSS…SSSS), and 1148–1176 (SSGS…NIKK).

It belongs to the protein kinase superfamily. STE Ser/Thr protein kinase family. STE20 subfamily. Mg(2+) is required as a cofactor.

The enzyme catalyses L-seryl-[protein] + ATP = O-phospho-L-seryl-[protein] + ADP + H(+). It carries out the reaction L-threonyl-[protein] + ATP = O-phospho-L-threonyl-[protein] + ADP + H(+). The sequence is that of Serine/threonine-protein kinase pakF from Dictyostelium discoideum (Social amoeba).